Here is a 394-residue protein sequence, read N- to C-terminus: Protein arginine N-methyltransferase 8 (394 aa).

A lipid anchor (N-myristoyl glycine) is attached at Gly-2. The segment at 21–40 is disordered; sequence VESTEVSSAPPQPPQPVIPA. 2 short sequence motifs (SH3-binding) span residues 29 to 42 and 53 to 58; these read APPQ…PAKP and PSCPGR. Residues 30–39 show a composition bias toward pro residues; it reads PPQPPQPVIP. Omega-N-methylarginine; by PRMT8 is present on Arg-58. Arg-73 is subject to Asymmetric dimethylarginine; by PRMT8. Residues 73-394 form the SAM-dependent MTase PRMT-type domain; sequence RDYYFDSYAH…TSVSNDYKMR (322 aa). S-adenosyl-L-methionine is bound by residues His-86, Arg-95, Gly-119, 119–122, Glu-141, and Glu-170; that span reads GSGT. Active-site residues include Glu-185 and Glu-194.

The protein belongs to the class I-like SAM-binding methyltransferase superfamily. Protein arginine N-methyltransferase family. PRMT8 subfamily. As to quaternary structure, homodimer. Tetramer; individual homodimers associates to form a homotetramer. Homooctamer; individual homodimers associates to form a homooctamer and homooligomerization is required for proper localization to the cell membrane. Heterodimer with PRMT1; heterodimerization may recruit PRMT1 activity to the plasma membrane. Interacts with PRMT2 (via the SH3 domain). Interacts with FYN (via the SH3 domain). Interacts with EWS; independently of EWS methylation status. In terms of tissue distribution, brain-specific. Only expressed in neurons, especially in the somatosensory and limbic systems, and a part of motor system. Highly expressed in all of the regions related to general somatosensory system. Expressed in most of the relay nuclei intervening the special somatosensory system, such as the auditory, visual and vestibular systems. Also present in forebrain limbic areas and thalamic nuclei relevant to limbic areas and in areas related to the motor system, such as the caudate putamen, Purkinje cells, inferior olivary nucleus and cerebellar nuclei.

The protein localises to the cell membrane. It carries out the reaction L-arginyl-[protein] + S-adenosyl-L-methionine = N(omega)-methyl-L-arginyl-[protein] + S-adenosyl-L-homocysteine + H(+). The catalysed reaction is L-arginyl-[protein] + 2 S-adenosyl-L-methionine = N(omega),N(omega)-dimethyl-L-arginyl-[protein] + 2 S-adenosyl-L-homocysteine + 2 H(+). In terms of biological role, S-adenosyl-L-methionine-dependent and membrane-associated arginine methyltransferase that can both catalyze the formation of omega-N monomethylarginine (MMA) and asymmetrical dimethylarginine (aDMA) in proteins such as NIFK, myelin basic protein, histone H4, H2A and H2A/H2B dimer. Able to mono- and dimethylate EWS protein; however its precise role toward EWS remains unclear as it still interacts with fully methylated EWS. This chain is Protein arginine N-methyltransferase 8, found in Mus musculus (Mouse).